The chain runs to 811 residues: MLLPTTIQPQTARKSQLPRGNSCLVGLHIASPQLLRVQPLVRTEPQSCFLSDLCQPPAQGFVQRPLPALQVVPAKRVPAPKAPDEQGSMLTPLSASDPLAVTSLSSSSAHPFISNLHTRHTEKLKKSLKVKTRSGRVSRPPKYKAKDYKFIKTEDLADGHLSDSDDYSELCVEEDEDQRERHALFDLSSCSLRPKSFKCQTCEKSYIGKGGLARHFKLNPGHGQLDPEMVLSEKASGSTLRGCTEERTLSLTSLGLSMPADPCEGGARSCLVTESARGGLQNGQSVDVEETLPSEPENGALLRSERYQGPRRRACSETLAESRTAVLQQRRAAQLPGGPAAAGEQRASPSKARLKEFLQQCDREDLVELALPQLAQVVTVYEFLLMKVEKDHLAKPFFPAIYKEFEELHKMVKKMCQDYLSSSGLCSQETLEINNDKVAESLGITEFLRKKEIHPDNLGPKHLSRDMDGEQLEGASSEKREREAAEEGLASVKRPRREALSNDTTESLAANSRGREKPRPLHALAAGFSPPVNVTVSPRSEESHTTTVSGGNGSVFQAGPQLQALANLEARRGSIGAALSSRDVSGLPVYAQSGEPRRLTQAQVAAFPGENALEHSSDQDTWDSLRSPGFCSPLSSGGGAESLPPGGPGHAEAGHLGKVCDFHLNHQQPSPTSVLPTEVAAPPLEKILSVDSVAVDCAYRTVPKPGPQPGPHGSLLTEGCLRSLSGDLNRFPCGMEVHSGQRELESVVAVGEAMAFEISNGSHELLSQGQKQIFIQTSDGLILSPPGTIVSQEEDIVTVTDAEGRACGWAR.

The C2H2-type zinc finger occupies 197–222; the sequence is FKCQTCEKSYIGKGGLARHFKLNPGH. Disordered regions lie at residues 329-349, 455-555, and 612-654; these read QRRA…RASP, PDNL…NGSV, and ALEH…AEAG. Residues 476–485 show a composition bias toward basic and acidic residues; sequence SSEKREREAA. Polar residues predominate over residues 501-510; sequence SNDTTESLAA.

This Homo sapiens (Human) protein is Zinc finger protein 839 (ZNF839).